A 186-amino-acid polypeptide reads, in one-letter code: MTGPYFPQTIPFLPSYIPQDVDMTAVKAEVAALGVSAPPAATPGLLEVVQHARDEGIDLKIVLLDHNPPNDTPLRDIATVVGADYSDATVLVLSPNYVGSYSTQYPRVTLEAGEDHSKTGNPVQSAQNFVHELSTPEFPWSALTIVLLIGVLAAAVGARLMQLRGRRSATSTDAAPGAGDDLNQGV.

The helical transmembrane segment at 138 to 158 (FPWSALTIVLLIGVLAAAVGA) threads the bilayer. The segment at 166–186 (RRSATSTDAAPGAGDDLNQGV) is disordered.

Its subcellular location is the membrane. Its function is as follows. May affect the expression of genes linked to host macrophage apoptosis and immune response, thereby promoting the survival of M.tuberculosis in host macrophages. Overexpression of the gene increases susceptibility of the bacteria to various stresses, but promotes intracellular survival in host macrophages. It has no impact on the growth rate in vitro. Overexpression causes changes in the transcriptome of THP-1 cells, including expression of genes involved in cell proliferation, fatty acid degradation, cytokine-cytokine receptor interaction and immune response pathways. The polypeptide is Membrane protein Rv1476 (Mycobacterium tuberculosis (strain ATCC 25618 / H37Rv)).